A 194-amino-acid polypeptide reads, in one-letter code: uncharacterized protein (194 aa).

An SIS domain is found at 34–192; it reads VMQCLLGGNK…CELVDQTLFP (159 aa).

Belongs to the SIS family. DiaA subfamily.

This is an uncharacterized protein from Haemophilus influenzae (strain ATCC 51907 / DSM 11121 / KW20 / Rd).